The following is an 88-amino-acid chain: Protein Aeq5-like1 (88 aa).

The signal sequence occupies residues 1-20; it reads MKSVIAVLVLSLVLVNFTQA. 4 cysteine pairs are disulfide-bonded: Cys-29/Cys-68, Cys-33/Cys-64, Cys-40/Cys-56, and Cys-47/Cys-53.

Is expressed in the ectodermal cells of gastrulae and planulae. Is also noticeable in the endoderm in late planulae. In the primary polyps, is expressed in both ectoderm (sensory neurons) and endoderm (ganglions). Is not expressed in nematocytes.

In terms of biological role, probable neuropeptide. This Nematostella vectensis (Starlet sea anemone) protein is Protein Aeq5-like1.